Here is a 152-residue protein sequence, read N- to C-terminus: D-aminoacyl-tRNA deacylase (152 aa).

Residues 137 to 138 (GP) carry the Gly-cisPro motif, important for rejection of L-amino acids motif.

It belongs to the DTD family. In terms of assembly, homodimer.

The protein resides in the cytoplasm. It catalyses the reaction glycyl-tRNA(Ala) + H2O = tRNA(Ala) + glycine + H(+). It carries out the reaction a D-aminoacyl-tRNA + H2O = a tRNA + a D-alpha-amino acid + H(+). Functionally, an aminoacyl-tRNA editing enzyme that deacylates mischarged D-aminoacyl-tRNAs. Also deacylates mischarged glycyl-tRNA(Ala), protecting cells against glycine mischarging by AlaRS. Acts via tRNA-based rather than protein-based catalysis; rejects L-amino acids rather than detecting D-amino acids in the active site. By recycling D-aminoacyl-tRNA to D-amino acids and free tRNA molecules, this enzyme counteracts the toxicity associated with the formation of D-aminoacyl-tRNA entities in vivo and helps enforce protein L-homochirality. The sequence is that of D-aminoacyl-tRNA deacylase from Thermus aquaticus.